Reading from the N-terminus, the 453-residue chain is tRNA modification GTPase MnmE (453 aa).

R28, E90, and R129 together coordinate (6S)-5-formyl-5,6,7,8-tetrahydrofolate. One can recognise a TrmE-type G domain in the interval 224–375; it reads GLRVAIIGRP…LSSALLKLCG (152 aa). A K(+)-binding site is contributed by N234. GTP is bound by residues 234 to 239, 253 to 259, 278 to 281, and 356 to 358; these read NVGKSS, TDLPGTT, DTAG, and SAR. S238 contacts Mg(2+). Positions 253, 255, and 258 each coordinate K(+). T259 is a binding site for Mg(2+). K453 serves as a coordination point for (6S)-5-formyl-5,6,7,8-tetrahydrofolate.

The protein belongs to the TRAFAC class TrmE-Era-EngA-EngB-Septin-like GTPase superfamily. TrmE GTPase family. Homodimer. Heterotetramer of two MnmE and two MnmG subunits. Requires K(+) as cofactor.

It is found in the cytoplasm. Functionally, exhibits a very high intrinsic GTPase hydrolysis rate. Involved in the addition of a carboxymethylaminomethyl (cmnm) group at the wobble position (U34) of certain tRNAs, forming tRNA-cmnm(5)s(2)U34. The sequence is that of tRNA modification GTPase MnmE from Synechococcus sp. (strain RCC307).